The primary structure comprises 234 residues: Ribonuclease 3 (234 aa).

Positions 6-134 (RKSLEERVGH…IVGALYLDGG (129 aa)) constitute an RNase III domain. Glutamate 47 is a binding site for Mg(2+). Residue aspartate 51 is part of the active site. Mg(2+) is bound by residues serine 120 and glutamate 123. The active site involves glutamate 123. Residues 162–231 (DYKTRLQELV…AKNALEMKYK (70 aa)) enclose the DRBM domain.

The protein belongs to the ribonuclease III family. In terms of assembly, homodimer. Mg(2+) serves as cofactor.

It localises to the cytoplasm. It carries out the reaction Endonucleolytic cleavage to 5'-phosphomonoester.. Digests double-stranded RNA. Involved in the processing of primary rRNA transcript to yield the immediate precursors to the large and small rRNAs (23S and 16S). Processes some mRNAs, and tRNAs when they are encoded in the rRNA operon. Processes pre-crRNA and tracrRNA of type II CRISPR loci if present in the organism. The protein is Ribonuclease 3 of Bdellovibrio bacteriovorus (strain ATCC 15356 / DSM 50701 / NCIMB 9529 / HD100).